Here is a 399-residue protein sequence, read N- to C-terminus: Aromatic-amino-acid aminotransferase (399 aa).

Positions 36, 67, 132, and 184 each coordinate substrate. Residue Lys247 is modified to N6-(pyridoxal phosphate)lysine. Arg375 provides a ligand contact to substrate.

This sequence belongs to the class-I pyridoxal-phosphate-dependent aminotransferase family. As to quaternary structure, homodimer. Pyridoxal 5'-phosphate is required as a cofactor.

It localises to the cytoplasm. The enzyme catalyses an aromatic L-alpha-amino acid + 2-oxoglutarate = an aromatic oxo-acid + L-glutamate. This chain is Aromatic-amino-acid aminotransferase (phhC), found in Pseudomonas aeruginosa (strain ATCC 15692 / DSM 22644 / CIP 104116 / JCM 14847 / LMG 12228 / 1C / PRS 101 / PAO1).